Here is a 955-residue protein sequence, read N- to C-terminus: MEASSSGITNGKTKVFHPEGGVDLQGYQLDMQILPDGPKSDVDFSEILNAIQEMAKDVNILFDELEAVSSPCKDDDSLLHPGNLTSTSDDASRLEAGGETVPERNKSNGLYFRDGKCRIDYILVYRKSNPQTEKREVFERNIRAEGLQMEKESSLINSDIIFVKLHAPWEVLGRYAEQMNVRMPFRRKIYYLPRRYKFMSRIDKQISRFRRWLPKKPMRLDKETLPDLEENDCYTAPFSQQRIHHFIIHNKETFFNNATRSRIVHHILQRIKYEEGKNKIGLNRLLTNGSYEAAFPLHEGSYRSKNSIRTHGAENHRHLLYECWASWGVWYKYQPLDLVRRYFGEKIGLYFAWLGWYTGMLFPAAFIGLFVFLYGVTTLDHSQVSKEVCQATDIIMCPVCDKYCPFMRLSDSCVYAKVTHLFDNGATVFFAVFMAVWATVFLEFWKRRRAVIAYDWDLIDWEEEEEEIRPQFEAKYSKKERMNPISGKPEPYQAFTDKCSRLIVSASGIFFMICVVIAAVFGIVIYRVVTVSTFAAFKWALIRNNSQVATTGTAVCINFCIIMLLNVLYEKVALLLTNLEQPRTESEWENSFTLKMFLFQFVNLNSSTFYIAFFLGRFTGHPGAYLRLINRWRLEECHPSGCLIDLCMQMGIIMVLKQTWNNFMELGYPLIQNWWTRRKVRQEHGPERKISFPQWEKDYNLQPMNAYGLFDEYLEMILQFGFTTIFVAAFPLAPLLALLNNIIEIRLDAYKFVTQWRRPLASRAKDIGIWYGILEGIGILSVITNAFVIAITSDFIPRLVYAYKYGPCAGQGEAGQKCMVGYVNASLSVFRISDFENRSEPESDGSEFSGTPLKYCRYRDYRDPPHSLVPYGYTLQFWHVLAARLAFIIVFEHLVFCIKHLISYLIPDLPKDLRDRMRREKYLIQEMMYEAELERLQKERKERKKNGKAHHNEWP.

The Extracellular portion of the chain corresponds to 1 to 352 (MEASSSGITN…FGEKIGLYFA (352 aa)). Residues 72–100 (CKDDDSLLHPGNLTSTSDDASRLEAGGET) are disordered. N-linked (GlcNAc...) asparagine glycosylation is found at asparagine 83, asparagine 105, asparagine 257, and asparagine 288. A helical membrane pass occupies residues 353 to 373 (WLGWYTGMLFPAAFIGLFVFL). Residues 374-424 (YGVTTLDHSQVSKEVCQATDIIMCPVCDKYCPFMRLSDSCVYAKVTHLFDN) lie on the Cytoplasmic side of the membrane. Residues 425-445 (GATVFFAVFMAVWATVFLEFW) traverse the membrane as a helical segment. The Extracellular portion of the chain corresponds to 446-505 (KRRRAVIAYDWDLIDWEEEEEEIRPQFEAKYSKKERMNPISGKPEPYQAFTDKCSRLIVS). The chain crosses the membrane as a helical span at residues 506–526 (ASGIFFMICVVIAAVFGIVIY). At 527 to 547 (RVVTVSTFAAFKWALIRNNSQ) the chain is on the cytoplasmic side. The chain crosses the membrane as a helical span at residues 548–568 (VATTGTAVCINFCIIMLLNVL). Over 569–595 (YEKVALLLTNLEQPRTESEWENSFTLK) the chain is Extracellular. Residues 596–616 (MFLFQFVNLNSSTFYIAFFLG) form a helical membrane-spanning segment. The Cytoplasmic segment spans residues 617-715 (RFTGHPGAYL…AYGLFDEYLE (99 aa)). A helical membrane pass occupies residues 716-736 (MILQFGFTTIFVAAFPLAPLL). Residues 737-768 (ALLNNIIEIRLDAYKFVTQWRRPLASRAKDIG) lie on the Extracellular side of the membrane. Residues 769–789 (IWYGILEGIGILSVITNAFVI) form a helical membrane-spanning segment. Residues 790 to 885 (AITSDFIPRL…QFWHVLAARL (96 aa)) lie on the Cytoplasmic side of the membrane. Residues 886–906 (AFIIVFEHLVFCIKHLISYLI) form a helical membrane-spanning segment. The Extracellular portion of the chain corresponds to 907–955 (PDLPKDLRDRMRREKYLIQEMMYEAELERLQKERKERKKNGKAHHNEWP).

This sequence belongs to the anoctamin family.

It is found in the cell membrane. The enzyme catalyses a 1,2-diacyl-sn-glycero-3-phospho-L-serine(in) = a 1,2-diacyl-sn-glycero-3-phospho-L-serine(out). It carries out the reaction a beta-D-galactosyl-(1&lt;-&gt;1')-N-acylsphing-4-enine(out) = a beta-D-galactosyl-(1&lt;-&gt;1')-N-acylsphing-4-enine(in). It catalyses the reaction a 1,2-diacyl-sn-glycero-3-phosphocholine(in) = a 1,2-diacyl-sn-glycero-3-phosphocholine(out). Functionally, has calcium-dependent phospholipid scramblase activity; scrambles phosphatidylserine, phosphatidylcholine and galactosylceramide. Does not exhibit calcium-activated chloride channel (CaCC) activity. This chain is Anoctamin-4 (ANO4), found in Homo sapiens (Human).